Here is a 335-residue protein sequence, read N- to C-terminus: Terpene synthase 4 (335 aa).

Positions 103–108 (DDYIFE) match the DDxx(x)D/E motif motif. Residues 243–251 (NDLYSFNRE) carry the NDxxSxxxD/E motif motif.

It belongs to the terpene synthase family.

It catalyses the reaction (2E,6E)-farnesyl diphosphate + H2O = (6E)-nerolidol + diphosphate. In terms of biological role, terpene synthase that converts its substrate farnesyl diphosphate (FPP) into the sesquiterpene (E)-nerolidol. The protein is Terpene synthase 4 of Dictyostelium discoideum (Social amoeba).